Reading from the N-terminus, the 591-residue chain is Lipoprotein LpqB (591 aa).

Positions 1 to 20 are cleaved as a signal peptide; that stretch reads MTLRPSRRAVLSAAAVLLTG. Residue C21 is the site of N-palmitoyl cysteine attachment. C21 carries S-diacylglycerol cysteine lipidation.

The protein belongs to the LpqB lipoprotein family.

The protein resides in the cell membrane. This chain is Lipoprotein LpqB, found in Cutibacterium acnes (strain DSM 16379 / KPA171202) (Propionibacterium acnes).